Consider the following 149-residue polypeptide: Vesicle-associated protein 3-1 (149 aa).

Met1 is modified (N-acetylmethionine). Ser2 is subject to N-acetylserine; in Vesicle-associated protein 3-1, N-terminally processed. The 121-residue stretch at 6-126 (LLEIEPMYLQ…EETKLRVTYV (121 aa)) folds into the MSP domain.

It belongs to the VAMP-associated protein (VAP) (TC 9.B.17) family.

In terms of biological role, may play a role in vesicle trafficking. The chain is Vesicle-associated protein 3-1 (PVA31) from Arabidopsis thaliana (Mouse-ear cress).